A 338-amino-acid chain; its full sequence is UDP-glucose 4-epimerase (338 aa).

Residues 11-12, 31-36, 58-59, 80-84, asparagine 99, serine 124, tyrosine 149, lysine 153, and phenylalanine 178 each bind NAD(+); these read FI, DNLCNS, DI, and FAGLK. Positions 124 and 149 each coordinate substrate. Tyrosine 149 acts as the Proton acceptor in catalysis. Substrate is bound by residues asparagine 179, 199–200, 216–218, arginine 231, and 292–295; these read NL, SVF, and RAGD.

The protein belongs to the NAD(P)-dependent epimerase/dehydratase family. Homodimer. The cofactor is NAD(+).

It catalyses the reaction UDP-alpha-D-glucose = UDP-alpha-D-galactose. The protein operates within carbohydrate metabolism; galactose metabolism. In terms of biological role, involved in the metabolism of galactose. Plays an essential role in the incorporation of galactose into meningococcal lipopolysaccharide surface molecules, which are important for pathogenesis. Catalyzes the conversion of UDP-galactose (UDP-Gal) to UDP-glucose (UDP-Glc) through a mechanism involving the transient reduction of NAD. The polypeptide is UDP-glucose 4-epimerase (galE) (Neisseria gonorrhoeae).